The following is a 93-amino-acid chain: UPF0728 protein C10orf53 homolog (93 aa).

Belongs to the UPF0728 family.

The protein is UPF0728 protein C10orf53 homolog of Xenopus tropicalis (Western clawed frog).